Reading from the N-terminus, the 178-residue chain is Endoribonuclease YbeY (178 aa).

Residues histidine 118, histidine 122, and histidine 128 each coordinate Zn(2+).

This sequence belongs to the endoribonuclease YbeY family. The cofactor is Zn(2+).

The protein resides in the cytoplasm. Functionally, single strand-specific metallo-endoribonuclease involved in late-stage 70S ribosome quality control and in maturation of the 3' terminus of the 16S rRNA. The chain is Endoribonuclease YbeY from Mycolicibacterium gilvum (strain PYR-GCK) (Mycobacterium gilvum (strain PYR-GCK)).